A 382-amino-acid chain; its full sequence is V-type proton ATPase subunit C 1 (382 aa).

N-acetylthreonine is present on threonine 2.

The protein belongs to the V-ATPase C subunit family. In terms of assembly, V-ATPase is a heteromultimeric enzyme made up of two complexes: the ATP-hydrolytic V1 complex and the proton translocation V0 complex. The V1 complex consists of three catalytic AB heterodimers that form a heterohexamer, three peripheral stalks each consisting of EG heterodimers, one central rotor including subunits D and F, and the regulatory subunits C and H. The proton translocation complex V0 consists of the proton transport subunit a, a ring of proteolipid subunits c9c'', rotary subunit d, subunits e and f, and two accessory subunits.

In terms of biological role, subunit of the V1 complex of vacuolar(H+)-ATPase (V-ATPase), a multisubunit enzyme composed of a peripheral complex (V1) that hydrolyzes ATP and a membrane integral complex (V0) that translocates protons. V-ATPase is responsible for acidifying and maintaining the pH of intracellular compartments and in some cell types, is targeted to the plasma membrane, where it is responsible for acidifying the extracellular environment. Subunit C is necessary for the assembly of the catalytic sector of the enzyme and is likely to have a specific function in its catalytic activity. This is V-type proton ATPase subunit C 1 (atp6v1c1) from Xenopus laevis (African clawed frog).